The following is a 417-amino-acid chain: Dibenzothiophene monooxygenase (417 aa).

Positions 19 to 125 are helical N-terminus; sequence DPVAVARGLA…LYTQIAQNNW (107 aa). Residues Tyr96, 129–134, 159–163, Arg282, 369–370, and His391 each bind FMN; these read NASSEN, KHFCS, and AR. A central beta-barrel N-terminus region spans residues 126–234; it reads WTGNASSENN…VEPDEVLGAP (109 aa). The tract at residues 131 to 142 is lid loop; the sequence is SSENNSHELDVK. The interval 235 to 409 is helical C-terminus; that stretch reads NAFVLAFIQS…DVGKHTLNGQ (175 aa).

Belongs to the DszC flavin monooxygenase family. In terms of assembly, homotetramer.

It is found in the cytoplasm. The enzyme catalyses dibenzothiophene + 2 FMNH2 + 2 O2 = dibenzothiophene 5,5-dioxide + 2 FMN + 2 H2O + 2 H(+). The catalysed reaction is dibenzothiophene + FMNH2 + O2 = dibenzothiophene 5-oxide + FMN + H2O + H(+). It catalyses the reaction dibenzothiophene 5-oxide + FMNH2 + O2 = dibenzothiophene 5,5-dioxide + FMN + H2O + H(+). It functions in the pathway sulfur metabolism; dibenzothiophene degradation. Functionally, catalyzes the first step of the '4S' desulfurization pathway that removes covalently bound sulfur from dibenzothiophene (DBT) without breaking carbon-carbon bonds. Sulfur dioxygenase which converts DBT to DBT-sulfone (DBTO2 or DBT 5,5-dioxide) in a stepwise manner. This chain is Dibenzothiophene monooxygenase, found in Rhodococcus erythropolis (Arthrobacter picolinophilus).